Here is a 306-residue protein sequence, read N- to C-terminus: Lipoyl synthase (306 aa).

Cysteine 55, cysteine 60, cysteine 66, cysteine 81, cysteine 85, cysteine 88, and serine 294 together coordinate [4Fe-4S] cluster. Positions tryptophan 67–threonine 283 constitute a Radical SAM core domain.

This sequence belongs to the radical SAM superfamily. Lipoyl synthase family. It depends on [4Fe-4S] cluster as a cofactor.

Its subcellular location is the cytoplasm. The enzyme catalyses [[Fe-S] cluster scaffold protein carrying a second [4Fe-4S](2+) cluster] + N(6)-octanoyl-L-lysyl-[protein] + 2 oxidized [2Fe-2S]-[ferredoxin] + 2 S-adenosyl-L-methionine + 4 H(+) = [[Fe-S] cluster scaffold protein] + N(6)-[(R)-dihydrolipoyl]-L-lysyl-[protein] + 4 Fe(3+) + 2 hydrogen sulfide + 2 5'-deoxyadenosine + 2 L-methionine + 2 reduced [2Fe-2S]-[ferredoxin]. It participates in protein modification; protein lipoylation via endogenous pathway; protein N(6)-(lipoyl)lysine from octanoyl-[acyl-carrier-protein]: step 2/2. Its function is as follows. Catalyzes the radical-mediated insertion of two sulfur atoms into the C-6 and C-8 positions of the octanoyl moiety bound to the lipoyl domains of lipoate-dependent enzymes, thereby converting the octanoylated domains into lipoylated derivatives. The chain is Lipoyl synthase from Chloroflexus aurantiacus (strain ATCC 29364 / DSM 637 / Y-400-fl).